A 357-amino-acid polypeptide reads, in one-letter code: Homoarginine-6-hydroxylase 2-ODD-C23.2 (357 aa).

Residues 208 to 308 enclose the Fe2OG dioxygenase domain; that stretch reads PFWVMRIIGY…RVCVAFFYET (101 aa). H231, D233, and H289 together coordinate Fe cation. Residue R299 participates in 2-oxoglutarate binding.

This sequence belongs to the iron/ascorbate-dependent oxidoreductase family. Requires Fe(2+) as cofactor. In terms of tissue distribution, expressed in senescent leaves.

Its subcellular location is the cytoplasm. The protein resides in the cytosol. The catalysed reaction is L-homoarginine + 2-oxoglutarate + O2 = 6-hydroxy-L-homoarginine + succinate + CO2. It carries out the reaction L-arginine + 2-oxoglutarate + O2 = 5-hydroxy-L-arginine + succinate + CO2. Its activity is regulated as follows. Slightly inhibited by canavanine (Can), the 5-oxa-analog of arginine. In terms of biological role, 2-oxoglutarate-dependent dioxygenase catalyzing homoarginine 6-hydroxylation and arginine-5-hydroxylation thus producing 6-hydroxy-L-homoarginine and 5-hydroxy-L-arginine, respectively. Guanidine (Gd) is in turn synthesized by the spontaneous conversion of 6-hydroxy-L-homoarginine and 5-hydroxy-L-arginine to (S)-2-amino-6-oxohexanoate (RHEA:79843) and L-glutamate 5-semialdehyde (RHEA:31527); guanidine is a nitrogen-rich compound that may serve as a defense or signaling substance. The protein is Homoarginine-6-hydroxylase 2-ODD-C23.2 of Arabidopsis thaliana (Mouse-ear cress).